The primary structure comprises 547 residues: Chaperonin GroEL (547 aa).

ATP-binding positions include T30–P33, K51, D87–T91, G415, N479–A481, and D495. The interval K526–F547 is disordered. Residues A535–F547 are compositionally biased toward gly residues.

This sequence belongs to the chaperonin (HSP60) family. As to quaternary structure, forms a cylinder of 14 subunits composed of two heptameric rings stacked back-to-back. Interacts with the co-chaperonin GroES.

The protein resides in the cytoplasm. It carries out the reaction ATP + H2O + a folded polypeptide = ADP + phosphate + an unfolded polypeptide.. Functionally, together with its co-chaperonin GroES, plays an essential role in assisting protein folding. The GroEL-GroES system forms a nano-cage that allows encapsulation of the non-native substrate proteins and provides a physical environment optimized to promote and accelerate protein folding. This is Chaperonin GroEL from Xylella fastidiosa (strain M12).